We begin with the raw amino-acid sequence, 422 residues long: UDP-N-acetylglucosamine 1-carboxyvinyltransferase (422 aa).

Phosphoenolpyruvate is bound at residue 22-23 (KN). Arg95 is a binding site for UDP-N-acetyl-alpha-D-glucosamine. Cys119 (proton donor) is an active-site residue. Cys119 is modified (2-(S-cysteinyl)pyruvic acid O-phosphothioketal). Residues 124-128 (RPIDQ), Asp309, and Val331 contribute to the UDP-N-acetyl-alpha-D-glucosamine site.

It belongs to the EPSP synthase family. MurA subfamily.

It is found in the cytoplasm. The catalysed reaction is phosphoenolpyruvate + UDP-N-acetyl-alpha-D-glucosamine = UDP-N-acetyl-3-O-(1-carboxyvinyl)-alpha-D-glucosamine + phosphate. The protein operates within cell wall biogenesis; peptidoglycan biosynthesis. In terms of biological role, cell wall formation. Adds enolpyruvyl to UDP-N-acetylglucosamine. This Anaeromyxobacter sp. (strain K) protein is UDP-N-acetylglucosamine 1-carboxyvinyltransferase.